A 73-amino-acid polypeptide reads, in one-letter code: Small ribosomal subunit protein uS15c (73 aa).

It belongs to the universal ribosomal protein uS15 family. As to quaternary structure, part of the 30S ribosomal subunit.

The protein resides in the plastid. It is found in the chloroplast. The sequence is that of Small ribosomal subunit protein uS15c (rps15) from Welwitschia mirabilis (Tree tumbo).